Reading from the N-terminus, the 230-residue chain is Heptaprenylglyceryl phosphate synthase (230 aa).

Sn-glycerol 1-phosphate is bound at residue Lys12. Positions 14 and 40 each coordinate Mg(2+). Sn-glycerol 1-phosphate contacts are provided by residues 159–164, Gly189, and 209–210; these read YIEYSG and GD.

Belongs to the GGGP/HepGP synthase family. Group I subfamily. Homodimer. It depends on Mg(2+) as a cofactor.

The enzyme catalyses sn-glycerol 1-phosphate + all-trans-heptaprenyl diphosphate = 3-heptaprenyl-sn-glycero-1-phosphate + diphosphate. It functions in the pathway membrane lipid metabolism; glycerophospholipid metabolism. Prenyltransferase that catalyzes in vivo the transfer of the heptaprenyl moiety of heptaprenyl pyrophosphate (HepPP; 35 carbon atoms) to the C3 hydroxyl of sn-glycerol-1-phosphate (G1P), producing heptaprenylglyceryl phosphate (HepGP). This reaction is an ether-bond-formation step in the biosynthesis of archaea-type G1P-based membrane lipids found in Bacillales. The chain is Heptaprenylglyceryl phosphate synthase from Staphylococcus aureus (strain bovine RF122 / ET3-1).